The chain runs to 226 residues: Thiopurine S-methyltransferase (226 aa).

S-adenosyl-L-methionine contacts are provided by Trp16, Met51, Glu72, and Arg131.

Belongs to the class I-like SAM-binding methyltransferase superfamily. TPMT family.

The protein resides in the cytoplasm. It catalyses the reaction S-adenosyl-L-methionine + a thiopurine = S-adenosyl-L-homocysteine + a thiopurine S-methylether.. The polypeptide is Thiopurine S-methyltransferase (Francisella tularensis subsp. tularensis (strain SCHU S4 / Schu 4)).